Here is a 225-residue protein sequence, read N- to C-terminus: 2-C-methyl-D-erythritol 4-phosphate cytidylyltransferase (225 aa).

The protein belongs to the IspD/TarI cytidylyltransferase family. IspD subfamily.

The catalysed reaction is 2-C-methyl-D-erythritol 4-phosphate + CTP + H(+) = 4-CDP-2-C-methyl-D-erythritol + diphosphate. Its pathway is isoprenoid biosynthesis; isopentenyl diphosphate biosynthesis via DXP pathway; isopentenyl diphosphate from 1-deoxy-D-xylulose 5-phosphate: step 2/6. In terms of biological role, catalyzes the formation of 4-diphosphocytidyl-2-C-methyl-D-erythritol from CTP and 2-C-methyl-D-erythritol 4-phosphate (MEP). This is 2-C-methyl-D-erythritol 4-phosphate cytidylyltransferase from Clostridium perfringens (strain ATCC 13124 / DSM 756 / JCM 1290 / NCIMB 6125 / NCTC 8237 / Type A).